Reading from the N-terminus, the 733-residue chain is Two pore calcium channel protein 1 (733 aa).

N-acetylmethionine is present on Met1. Topologically, residues 1–71 (MEDPLIGRDS…RYYFIFTRLD (71 aa)) are cytoplasmic. A helical transmembrane segment spans residues 72 to 92 (LIWSLNYFALLFLNFFEQPLW). Residues 93–120 (CEKNPKPSCKDRDYYYLGELPYLTNAES) are Vacuolar-facing. A helical membrane pass occupies residues 121-141 (IIYEVITLAILLVHTFFPISY). The Cytoplasmic segment spans residues 142–158 (EGSRIFWTSRLNLVKVA). A helical transmembrane segment spans residues 159 to 179 (CVVILFVDVLVDFLYLSPLAF). Position 180 (Asp180) is a topological domain, vacuolar. Residues 181–199 (FLPFRIAPYVRVIIFILSI) form a helical; Voltage-sensor membrane-spanning segment. The Cytoplasmic portion of the chain corresponds to 200 to 218 (RELRDTLVLLSGMLGTYLN). The chain crosses the membrane as a helical span at residues 219 to 239 (ILALWMLFLLFASWIAFVMFE). Topologically, residues 240 to 245 (DTQQGL) are vacuolar. Positions 246–260 (TVFTSYGATLYQMFI) form an intramembrane region, pore-forming. The Vacuolar portion of the chain corresponds to 261–282 (LFTTSNNPDVWIPAYKSSRWSS). A helical membrane pass occupies residues 283-303 (VFFVLYVLIGVYFVTNLILAV). Residues 304–428 (VYDSFKEQLA…LSQQLRAFVR (125 aa)) lie on the Cytoplasmic side of the membrane. 2 consecutive EF-hand domains span residues 322-357 (MKRRMLEKAFGLIDSDKNGEIDKNQCIKLFEQLTNY) and 363-398 (ISKEEFGLIFDELDDTRDFKINKDEFADLCQAIALR). Residues 429-449 (SPNFGYAISFILIINFIAVVV) traverse the membrane as a helical segment. The Vacuolar portion of the chain corresponds to 450–465 (ETTLDIEESSAQKPWQ). Residues 466–486 (VAEFVFGWIYVLEMALKIYTY) traverse the membrane as a helical segment. At 487–498 (GFENYWREGANR) the chain is on the cytoplasmic side. The chain crosses the membrane as a helical span at residues 499–519 (FDFLVTWVIVIGETATFITPD). Topologically, residues 520 to 528 (ENTFFSNGE) are vacuolar. A helical; Voltage-sensor membrane pass occupies residues 529-546 (WIRYLLLARMLRLIRLLM). Residues 547 to 557 (NVQRYRAFIAT) are Cytoplasmic-facing. Residues 558–578 (FITLIPSLMPYLGTIFCVLCI) form a helical membrane-spanning segment. Residues 579 to 615 (YCSIGVQVFGGLVNAGNKKLFETELAEDDYLLFNFND) are Vacuolar-facing. The segment at residues 616 to 630 (YPNGMVTLFNLLVMG) is an intramembrane region (pore-forming). At 631–651 (NWQVWMESYKDLTGTWWSITY) the chain is on the vacuolar side. A helical membrane pass occupies residues 652–672 (FVSFYVITILLLLNLVVAFVL). Residues 673 to 733 (EAFFTELDLE…SKPECSTSDT (61 aa)) are Cytoplasmic-facing. The span at 686–695 (KCQGQDSQEK) shows a compositional bias: basic and acidic residues. The interval 686–711 (KCQGQDSQEKRNRRRSAGSKSRSQRV) is disordered.

It belongs to the calcium channel alpha-1 subunit (TC 1.A.1.11) family. Two pore calcium channel subfamily. Homodimer. As to expression, ubiquitously expressed.

The protein resides in the vacuole membrane. Its activity is regulated as follows. Inhibited by Al(3+). Its function is as follows. Functions as a voltage-gated inward-rectifying Ca(2+) channel (VDCC) across the vacuole membrane. Is one of the essential components of the slow vacuolar (SV) channel. Acts as the major ROS-responsive Ca(2+) channel and is the possible target of Al-dependent inhibition. Involved in the regulation of germination and stomatal movement. This is Two pore calcium channel protein 1 (TPC1) from Arabidopsis thaliana (Mouse-ear cress).